The following is a 351-amino-acid chain: MKMKMMVRIYFVSLSLLLFHSYAIDIENEITEFFNKMRDTLPAKDSKWLNPVCMFGGTMNDMAALGEPFSAKCPPIEDSLLSHRYKDYVVKWERLEKNRRRQVSNKRVKHGDLWIANYTSKFSNRRYLCTVTTKNGDCVQGVVRSHVWKPSSCIPKTYELGTYDKYGIDLYCGILYANHYNNITWYKDNKEINIDDFKYSQAGKELIIHNPELEDSGRYDCYVHYDDVRIKNDIVVSRCKILTVIPSQDHRFKLILDPKINVTIGEPANITCSAVSTSLFVDDVLIEWENPSGWIIGLDFGVYSILTSRGGITEATLYFENVTEEYIGNTYTCRGHNYYFDKTLTTTVVLE.

A signal peptide spans 1–23 (MKMKMMVRIYFVSLSLLLFHSYA). 2 Ig-like C2-type domains span residues 65-137 (LGEP…KNGD) and 155-237 (PKTY…IVVS). Disulfide bonds link cysteine 73–cysteine 129 and cysteine 172–cysteine 221. N-linked (GlcNAc...) asparagine; by host glycans are attached at residues asparagine 117, asparagine 182, asparagine 261, asparagine 269, and asparagine 321. The region spanning 246-345 (PSQDHRFKLI…HNYYFDKTLT (100 aa)) is the Ig-like V-type domain. The cysteines at positions 272 and 333 are disulfide-linked.

This sequence belongs to the interleukin-1 receptor family. In terms of assembly, interacts with host IFNA1.

It is found in the secreted. Functionally, counteracts the antiviral effects of host IFN-alpha/beta and key IFN-inducible proteins involved in viral RNA degradation suxh as host OAS1. Acts as a soluble IFN-alpha receptor and thus inhibits the interaction between host IFN-alpha and its receptor. The sequence is that of Soluble interferon alpha/beta receptor OPG204 (OPG204) from Cynomys gunnisoni (Gunnison's prairie dog).